The primary structure comprises 328 residues: H-2 class I histocompatibility antigen, K-Q alpha chain (328 aa).

The alpha-1 stretch occupies residues 1–71; that stretch reads PRFISVGYVD…LLRYYNQSAG (71 aa). Topologically, residues 1-265 are extracellular; the sequence is PRFISVGYVD…EPPPSAVSNT (265 aa). N-linked (GlcNAc...) asparagine glycosylation occurs at N67. The alpha-2 stretch occupies residues 72-163; the sequence is GSHTIQRMYG…KNGNATLLRT (92 aa). A disulfide bridge links C82 with C145. N-linked (GlcNAc...) asparagine glycosylation is present at N157. An alpha-3 region spans residues 164-255; it reads DSPKAHVTHH…GLPKPLTLRW (92 aa). The Ig-like C1-type domain maps to 166-252; that stretch reads PKAHVTHHSR…YHQGLPKPLT (87 aa). C184 and C240 are oxidised to a cystine. The interval 256–265 is connecting peptide; that stretch reads EPPPSAVSNT. A helical membrane pass occupies residues 266–289; sequence VIIAVLVVLGAAIVTGAVVAFVMM. Residues 290-328 lie on the Cytoplasmic side of the membrane; that stretch reads RRRNTGGKGGDYALAPGSQTSDLSLPDCKVMVHDPHSLA. 2 positions are modified to phosphoserine: S310 and S313.

The protein belongs to the MHC class I family. Heterodimer of an alpha chain and a beta chain (beta-2-microglobulin).

The protein resides in the membrane. Its function is as follows. Involved in the presentation of foreign antigens to the immune system. In Mus musculus (Mouse), this protein is H-2 class I histocompatibility antigen, K-Q alpha chain (H2-K1).